Consider the following 347-residue polypeptide: Fructose-1,6-bisphosphatase class 1 (347 aa).

Mg(2+)-binding residues include Glu-106, Asp-128, Ile-130, and Asp-131. Substrate-binding positions include 131 to 134, Asn-223, Tyr-251, and Lys-281; that span reads DGSS. Position 287 (Glu-287) interacts with Mg(2+).

The protein belongs to the FBPase class 1 family. Homotetramer. Mg(2+) serves as cofactor.

It localises to the cytoplasm. The catalysed reaction is beta-D-fructose 1,6-bisphosphate + H2O = beta-D-fructose 6-phosphate + phosphate. Its pathway is carbohydrate biosynthesis; Calvin cycle. In Synechocystis sp. (strain ATCC 27184 / PCC 6803 / Kazusa), this protein is Fructose-1,6-bisphosphatase class 1.